The chain runs to 565 residues: DNA-binding protein scr1 (565 aa).

Over residues Met1 to Asn19 the composition is skewed to polar residues. A disordered region spans residues Met1–Pro25. 2 consecutive C2H2-type zinc fingers follow at residues Tyr26–His48 and His54–His78. Disordered regions lie at residues Thr79–Thr119, Ser261–Ser303, Arg390–Ser434, and Ala466–Pro565. Residues Asn80 to Ser102 are compositionally biased toward low complexity. Polar residues-rich tracts occupy residues Glu108–Thr119, Leu276–His286, and Gly294–Ser303. A compositionally biased stretch (low complexity) spans Pro391–Pro413. Over residues Ala466–Pro478 the composition is skewed to polar residues. Composition is skewed to low complexity over residues Ser479–Ser492, Phe517–Ser526, and Ser537–Ser555.

It belongs to the creA/MIG C2H2-type zinc-finger protein family.

The protein resides in the nucleus. Its function is as follows. Involved in carbon catabolite repression. Represses the transcription of various genes including the inv1 gene. The polypeptide is DNA-binding protein scr1 (scr1) (Schizosaccharomyces pombe (strain 972 / ATCC 24843) (Fission yeast)).